Consider the following 356-residue polypeptide: Aromatic dipeptide epimerase (356 aa).

Residues Thr136 and 161–163 each bind substrate; that span reads KVK. Mg(2+)-binding residues include Asp191, Glu219, and Asp244. Residues Lys268 and 320-322 contribute to the substrate site; that span reads DLD.

It belongs to the mandelate racemase/muconate lactonizing enzyme family. The cofactor is Mg(2+).

Has epimerase activity with a variety of hydrophobic dipeptides (in vitro). Enzyme activity is highest with L-Phe-L-Tyr, but is still relatively low, suggesting that L-Phe-L-Tyr is not the physiological substrate. This Herpetosiphon aurantiacus (strain ATCC 23779 / DSM 785 / 114-95) protein is Aromatic dipeptide epimerase.